A 161-amino-acid chain; its full sequence is V-type proton ATPase subunit c (161 aa).

The Lumenal portion of the chain corresponds to 1-9 (MSTDLCPVY). The helical transmembrane segment at 10-32 (APFFGVMGCTAAIVFASFGAAYG) threads the bilayer. The Cytoplasmic portion of the chain corresponds to 33-54 (TAKAGVGISAMGVLRPDLIVKN). A helical membrane pass occupies residues 55–75 (TIPVVMAGIIAIYGLVVSVLI). At 76-91 (SGNLKQILSLYSGFIQ) the chain is on the lumenal side. Residues 92-113 (LGAGLSVGLAGLAAGFAIGIVG) traverse the membrane as a helical segment. Residues 114-125 (DAGVRGTAQQPR) are Cytoplasmic-facing. A helical membrane pass occupies residues 126-151 (LFVAMILILIFAEVLGLYGLIVALLL). Residues 152–161 (NTRATDNVTC) lie on the Lumenal side of the membrane.

The protein belongs to the V-ATPase proteolipid subunit family. V-ATPase is a heteromultimeric enzyme composed of a peripheral catalytic V1 complex (components A to H) attached to an integral membrane V0 proton pore complex (components: a, c, c', c'', d, e, f and VOA1). The decameric c-ring forms the proton-conducting pore, and is composed of eight proteolipid subunits c, one subunit c' and one subunit c''.

The protein localises to the vacuole membrane. In terms of biological role, proton-conducting pore forming subunit of the V0 complex of vacuolar(H+)-ATPase (V-ATPase), a multisubunit enzyme composed of a peripheral complex (V1) that hydrolyzes ATP and a membrane integral complex (V0) that translocates protons. V-ATPase is responsible for acidifying and maintaining the pH of intracellular compartments. The chain is V-type proton ATPase subunit c from Schizosaccharomyces pombe (strain 972 / ATCC 24843) (Fission yeast).